We begin with the raw amino-acid sequence, 198 residues long: Proteasome subunit beta 1 (198 aa).

A propeptide spans 1–6 (MSGPGA) (removed in mature form; by autocatalysis). The Nucleophile role is filled by T7.

The protein belongs to the peptidase T1B family. In terms of assembly, the 20S proteasome core is composed of 14 alpha and 14 beta subunits that assemble into four stacked heptameric rings, resulting in a barrel-shaped structure. The two inner rings, each composed of seven catalytic beta subunits, are sandwiched by two outer rings, each composed of seven alpha subunits. The catalytic chamber with the active sites is on the inside of the barrel. Has a gated structure, the ends of the cylinder being occluded by the N-termini of the alpha-subunits. Is capped at one or both ends by the proteasome regulatory ATPase, PAN.

The protein localises to the cytoplasm. It carries out the reaction Cleavage of peptide bonds with very broad specificity.. The formation of the proteasomal ATPase PAN-20S proteasome complex, via the docking of the C-termini of PAN into the intersubunit pockets in the alpha-rings, triggers opening of the gate for substrate entry. Interconversion between the open-gate and close-gate conformations leads to a dynamic regulation of the 20S proteasome proteolysis activity. Functionally, component of the proteasome core, a large protease complex with broad specificity involved in protein degradation. This chain is Proteasome subunit beta 1, found in Ignicoccus hospitalis (strain KIN4/I / DSM 18386 / JCM 14125).